The sequence spans 287 residues: 4-diphosphocytidyl-2-C-methyl-D-erythritol kinase (287 aa).

Lys-10 is a catalytic residue. Residue 92 to 102 participates in ATP binding; the sequence is PLAAGLAGGSA. Asp-134 is an active-site residue.

Belongs to the GHMP kinase family. IspE subfamily.

It carries out the reaction 4-CDP-2-C-methyl-D-erythritol + ATP = 4-CDP-2-C-methyl-D-erythritol 2-phosphate + ADP + H(+). The protein operates within isoprenoid biosynthesis; isopentenyl diphosphate biosynthesis via DXP pathway; isopentenyl diphosphate from 1-deoxy-D-xylulose 5-phosphate: step 3/6. Its function is as follows. Catalyzes the phosphorylation of the position 2 hydroxy group of 4-diphosphocytidyl-2C-methyl-D-erythritol. In Caldanaerobacter subterraneus subsp. tengcongensis (strain DSM 15242 / JCM 11007 / NBRC 100824 / MB4) (Thermoanaerobacter tengcongensis), this protein is 4-diphosphocytidyl-2-C-methyl-D-erythritol kinase.